We begin with the raw amino-acid sequence, 384 residues long: Beta-ureidopropionase (384 aa).

Positions 72-344 constitute a CN hydrolase domain; sequence VHVGLVQNRI…DGLLVAKLDL (273 aa). Glu119 acts as the Proton acceptor in catalysis. Catalysis depends on Lys196, which acts as the Proton donor. The active-site Nucleophile is Cys233. Ser378 bears the Phosphoserine mark.

This sequence belongs to the carbon-nitrogen hydrolase superfamily. BUP family. Homodimer, homotetramer, homooctamer; can also form higher homooligomers.

It localises to the cytoplasm. It catalyses the reaction 3-(carbamoylamino)propanoate + H2O + 2 H(+) = beta-alanine + NH4(+) + CO2. It carries out the reaction 3-(carbamoylamino)-2-methylpropanoate + H2O + 2 H(+) = (R)-3-amino-2-methylpropanoate + NH4(+) + CO2. The protein operates within amino-acid biosynthesis; beta-alanine biosynthesis. In terms of biological role, catalyzes a late step in pyrimidine degradation. Converts N-carbamoyl-beta-alanine (3-ureidopropanoate) into beta-alanine, ammonia and carbon dioxide. Likewise, converts N-carbamoyl-beta-aminoisobutyrate (3-ureidoisobutyrate) into beta-aminoisobutyrate, ammonia and carbon dioxide. The polypeptide is Beta-ureidopropionase (UPB1) (Pongo abelii (Sumatran orangutan)).